A 648-amino-acid polypeptide reads, in one-letter code: MTYDEYKEKVKTLKKWAYAYYVEDNPVATDEEYDRLYHEVLDYEMKHPDKALEDSPTKRVGGIVRDEFTKAKHIKRMWSMEDVFSKEEVQDWLDRVEKNVGECDYFCEPKFDGASMNLLYDDGKLLRAITRGDGVVGEEVTDNVRTIRSVPLVIDYKGLIEIRGEVVIRKDDFEQINEERLKAGEAPFANPRNAAAGSLRQLDSSVTAKRRLVFYPWGIGENTLDQKKLSEKMEFIYGQGFLRPPYHEACHTIDNIEKFYQFLISKRDEIPMMMDGMVIKVDEIEKQEELGYTVKFPRWMCAYKFPAVEKVTQIRAITLQVGRTGVITPVAEIEPVNIEGAMVSRATLHNFDEIERKDIRIGDHVIIIRSGDVIPKITKVLIDRRTGDEIPVERPTHCPTCGSELLDEGALIKCQNLECPDRVINTIIHFAKKGCMDIDGLGSKIVEQLVKEGKIHDILDLYSLTYEDLADLEGFKEKKISNLLDAIAASKGAPLHRLITAMGIEHIGEVASRALALEFGLGIVDAKYEDIVAIDGIGEEMANSLLEFMRVNREKVLKLFNTIKPTVEKKVEAKENPFKGKIVVLTGTMSESRGKIKEMLEELGAKVSGSVSKKTDFVIYGEDAGSKLTKAESLGVPTLTEDEMRAML.

NAD(+) contacts are provided by residues 30-34 (DEEYD), 79-80 (SM), and E108. K110 serves as the catalytic N6-AMP-lysine intermediate. Residues R131, E165, K280, and K304 each coordinate NAD(+). Positions 398, 401, 414, and 419 each coordinate Zn(2+). In terms of domain architecture, BRCT spans 573 to 648 (AKENPFKGKI…LTEDEMRAML (76 aa)).

Belongs to the NAD-dependent DNA ligase family. LigA subfamily. It depends on Mg(2+) as a cofactor. The cofactor is Mn(2+).

It catalyses the reaction NAD(+) + (deoxyribonucleotide)n-3'-hydroxyl + 5'-phospho-(deoxyribonucleotide)m = (deoxyribonucleotide)n+m + AMP + beta-nicotinamide D-nucleotide.. In terms of biological role, DNA ligase that catalyzes the formation of phosphodiester linkages between 5'-phosphoryl and 3'-hydroxyl groups in double-stranded DNA using NAD as a coenzyme and as the energy source for the reaction. It is essential for DNA replication and repair of damaged DNA. In Sulfurovum sp. (strain NBC37-1), this protein is DNA ligase.